The following is a 231-amino-acid chain: NADH-ubiquinone oxidoreductase chain 4 (231 aa).

6 helical membrane-spanning segments follow: residues 1–21 (PIAG…YGII), 34–54 (MFLP…LTCL), 61–80 (SLIA…AIII), 84–106 (WGLT…LFCL), 128–148 (ILPM…ATPP), and 169–189 (TIIL…HMFL).

It belongs to the complex I subunit 4 family.

Its subcellular location is the mitochondrion membrane. It catalyses the reaction a ubiquinone + NADH + 5 H(+)(in) = a ubiquinol + NAD(+) + 4 H(+)(out). Core subunit of the mitochondrial membrane respiratory chain NADH dehydrogenase (Complex I) that is believed to belong to the minimal assembly required for catalysis. Complex I functions in the transfer of electrons from NADH to the respiratory chain. The immediate electron acceptor for the enzyme is believed to be ubiquinone. The chain is NADH-ubiquinone oxidoreductase chain 4 (MT-ND4) from Atropoides picadoi (Picado's pit viper).